Here is a 468-residue protein sequence, read N- to C-terminus: Phosphomethylpyrimidine synthase (468 aa).

Substrate-binding positions include asparagine 80, methionine 109, tyrosine 138, histidine 173, 193 to 195 (SRG), 234 to 237 (DGLR), and glutamate 273. Histidine 277 contacts Zn(2+). Tyrosine 300 contributes to the substrate binding site. Residue histidine 341 participates in Zn(2+) binding. Cysteine 421, cysteine 424, and cysteine 429 together coordinate [4Fe-4S] cluster.

Belongs to the ThiC family. Homodimer. [4Fe-4S] cluster serves as cofactor.

It catalyses the reaction 5-amino-1-(5-phospho-beta-D-ribosyl)imidazole + S-adenosyl-L-methionine = 4-amino-2-methyl-5-(phosphooxymethyl)pyrimidine + CO + 5'-deoxyadenosine + formate + L-methionine + 3 H(+). Its pathway is cofactor biosynthesis; thiamine diphosphate biosynthesis. Functionally, catalyzes the synthesis of the hydroxymethylpyrimidine phosphate (HMP-P) moiety of thiamine from aminoimidazole ribotide (AIR) in a radical S-adenosyl-L-methionine (SAM)-dependent reaction. This is Phosphomethylpyrimidine synthase from Anaeromyxobacter sp. (strain Fw109-5).